Here is a 473-residue protein sequence, read N- to C-terminus: Aspartyl/glutamyl-tRNA(Asn/Gln) amidotransferase subunit B (473 aa).

It belongs to the GatB/GatE family. GatB subfamily. Heterotrimer of A, B and C subunits.

The enzyme catalyses L-glutamyl-tRNA(Gln) + L-glutamine + ATP + H2O = L-glutaminyl-tRNA(Gln) + L-glutamate + ADP + phosphate + H(+). The catalysed reaction is L-aspartyl-tRNA(Asn) + L-glutamine + ATP + H2O = L-asparaginyl-tRNA(Asn) + L-glutamate + ADP + phosphate + 2 H(+). Functionally, allows the formation of correctly charged Asn-tRNA(Asn) or Gln-tRNA(Gln) through the transamidation of misacylated Asp-tRNA(Asn) or Glu-tRNA(Gln) in organisms which lack either or both of asparaginyl-tRNA or glutaminyl-tRNA synthetases. The reaction takes place in the presence of glutamine and ATP through an activated phospho-Asp-tRNA(Asn) or phospho-Glu-tRNA(Gln). This is Aspartyl/glutamyl-tRNA(Asn/Gln) amidotransferase subunit B from Methanococcoides burtonii (strain DSM 6242 / NBRC 107633 / OCM 468 / ACE-M).